The chain runs to 321 residues: Lipoyl synthase (321 aa).

Cysteine 68, cysteine 73, cysteine 79, cysteine 94, cysteine 98, cysteine 101, and serine 308 together coordinate [4Fe-4S] cluster. One can recognise a Radical SAM core domain in the interval 80–297 (FNHGTATFMI…KEIALELGFT (218 aa)).

This sequence belongs to the radical SAM superfamily. Lipoyl synthase family. It depends on [4Fe-4S] cluster as a cofactor.

The protein resides in the cytoplasm. It carries out the reaction [[Fe-S] cluster scaffold protein carrying a second [4Fe-4S](2+) cluster] + N(6)-octanoyl-L-lysyl-[protein] + 2 oxidized [2Fe-2S]-[ferredoxin] + 2 S-adenosyl-L-methionine + 4 H(+) = [[Fe-S] cluster scaffold protein] + N(6)-[(R)-dihydrolipoyl]-L-lysyl-[protein] + 4 Fe(3+) + 2 hydrogen sulfide + 2 5'-deoxyadenosine + 2 L-methionine + 2 reduced [2Fe-2S]-[ferredoxin]. It participates in protein modification; protein lipoylation via endogenous pathway; protein N(6)-(lipoyl)lysine from octanoyl-[acyl-carrier-protein]: step 2/2. Catalyzes the radical-mediated insertion of two sulfur atoms into the C-6 and C-8 positions of the octanoyl moiety bound to the lipoyl domains of lipoate-dependent enzymes, thereby converting the octanoylated domains into lipoylated derivatives. This is Lipoyl synthase from Aliivibrio fischeri (strain MJ11) (Vibrio fischeri).